Here is a 365-residue protein sequence, read N- to C-terminus: Adenosine deaminase (365 aa).

Residues histidine 19 and histidine 21 each coordinate Zn(2+). The substrate site is built by histidine 21, aspartate 23, and glycine 181. Histidine 208 lines the Zn(2+) pocket. The Proton donor role is filled by glutamate 211. Aspartate 300 serves as a coordination point for Zn(2+).

Belongs to the metallo-dependent hydrolases superfamily. Adenosine and AMP deaminases family. Adenosine deaminase subfamily. It depends on Zn(2+) as a cofactor.

It catalyses the reaction adenosine + H2O + H(+) = inosine + NH4(+). The enzyme catalyses 2'-deoxyadenosine + H2O + H(+) = 2'-deoxyinosine + NH4(+). Its function is as follows. Catalyzes the hydrolytic deamination of adenosine and 2-deoxyadenosine. The sequence is that of Adenosine deaminase from Mycobacterium tuberculosis (strain ATCC 25177 / H37Ra).